We begin with the raw amino-acid sequence, 335 residues long: Pyruvate dehydrogenase E1 component subunit beta (335 aa).

Glu-60 contributes to the thiamine diphosphate binding site. K(+) contacts are provided by Ala-161, Ile-162, and Asn-166.

Heterodimer of an alpha and a beta chain. Thiamine diphosphate is required as a cofactor.

The protein localises to the plastid. The protein resides in the chloroplast. It carries out the reaction N(6)-[(R)-lipoyl]-L-lysyl-[protein] + pyruvate + H(+) = N(6)-[(R)-S(8)-acetyldihydrolipoyl]-L-lysyl-[protein] + CO2. In terms of biological role, the pyruvate dehydrogenase complex catalyzes the overall conversion of pyruvate to acetyl-CoA and CO(2). It contains multiple copies of three enzymatic components: pyruvate dehydrogenase (E1), dihydrolipoamide acetyltransferase (E2) and lipoamide dehydrogenase (E3). This chain is Pyruvate dehydrogenase E1 component subunit beta (pdhB), found in Chlorokybus atmophyticus (Soil alga).